We begin with the raw amino-acid sequence, 615 residues long: Nuclear receptor subfamily 1 group D member 1 (615 aa).

The segment covering 1–12 has biased composition (polar residues); sequence MTTLDSNNNTGG. A required for phosphorylation by CSNK1E and cytoplasmic localization region spans residues 1–70; that stretch reads MTTLDSNNNT…TQDPARSFGS (70 aa). Residues 1–120 form a disordered region; sequence MTTLDSNNNT…SSRVSPSKGT (120 aa). Positions 1–129 are modulating; it reads MTTLDSNNNT…TSNITKLNGM (129 aa). The segment covering 14–34 has biased composition (low complexity); the sequence is ITYIGSSGSSPSRTSPESLYS. Over residues 35–48 the composition is skewed to polar residues; sequence DSSNGSFQSLTQGC. The interval 49-285 is crucial for activation of GJA1; it reads PTYFPPSPTG…PPRSPSPEPT (237 aa). Phosphoserine; by GSK3-beta is present on residues serine 55 and serine 59. Residues 70–94 are compositionally biased toward low complexity; that stretch reads SAPPSLSDDSSPSSASSSSSSSSSS. Residues 130–206 constitute a DNA-binding region (nuclear receptor); that stretch reads VLLCKVCGDV…VGMSRDAVRF (77 aa). 2 consecutive NR C4-type zinc fingers follow at residues 133 to 153 and 170 to 194; these read CKVC…CEGC and CLKN…FKKC. N6-acetyllysine; by KAT5 is present on residues lysine 192 and lysine 193. Disordered regions lie at residues 235-286 and 312-337; these read LCPL…EPTM and PGNF…SQGC. Residues 240–252 are compositionally biased toward low complexity; that stretch reads TSPTPHPTSGSMG. Over residues 253–262 the composition is skewed to pro residues; sequence PSPPPAPAPT. A Phosphothreonine; by CDK1 modification is found at threonine 275. The NR LBD domain occupies 285–615; sequence TMEDVISQVA…KLLSFRVDAQ (331 aa). Positions 312–328 are enriched in polar residues; it reads PGNFNANHASGSPSATT. Cysteine 419 serves as a coordination point for heme. Lysine 592 is subject to N6-acetyllysine. Histidine 603 is a binding site for heme.

It belongs to the nuclear hormone receptor family. NR1 subfamily. Binds DNA as a monomer or a homodimer. Interacts with NR2E3 and ZNHIT1. Interacts with C1D. Interacts with SP1. Interacts with OPHN1 (via C-terminus). Interacts with PER2; the interaction associates PER2 to BMAL1 promoter region. Interacts with CRY1. Interacts with CCAR2. Interacts with SIAH2. Interacts with FBXW7 and CDK1. Interacts with HUWE1. Interacts with NR0B2. Interacts with NFIL3. Interacts (via domain NR LBD) with HSP90AA1 and HSP90AB1. In terms of processing, ubiquitinated, leading to its proteasomal degradation. Ubiquitinated by the SCF(FBXW7) complex when phosphorylated by CDK1 leading to its proteasomal degradation. Ubiquitinated by SIAH2; leading to its proteasomal degradation. Rapidly ubiquitinated in response to inflammatory triggers and sumoylation is a prerequisite to its ubiquitination. Sumoylated by UBE2I, desumoylated by SENP1, and sumoylation is a prerequisite to its ubiquitination. Post-translationally, phosphorylated by CSNK1E; phosphorylation enhances its cytoplasmic localization. In terms of processing, undergoes lysosome-mediated degradation in a time-dependent manner in the liver. As to expression, expressed during adipocyte differentiation (at protein level). Expressed in skeletal muscle, bladder, lumbar spinal cord, pancreatic islets and hypothalamus. Expressed in developing and adult retina. In the adult retina, predominantly expressed in the outer nuclear layer, where rod and cone cells reside, and also localized to the ganglion cell layer. Expressed in a circadian manner in the liver. Expressed in a circadian manner in the lung with a peak between ZT8 and ZT12.

Its subcellular location is the nucleus. It is found in the cytoplasm. It localises to the cell projection. The protein resides in the dendrite. The protein localises to the dendritic spine. Transcriptional repressor which coordinates circadian rhythm and metabolic pathways in a heme-dependent manner. Integral component of the complex transcription machinery that governs circadian rhythmicity and forms a critical negative limb of the circadian clock by directly repressing the expression of core clock components BMAL1, CLOCK and CRY1. Also regulates genes involved in metabolic functions, including lipid and bile acid metabolism, adipogenesis, gluconeogenesis and the macrophage inflammatory response. Acts as a receptor for heme which stimulates its interaction with the NCOR1/HDAC3 corepressor complex, enhancing transcriptional repression. Recognizes two classes of DNA response elements within the promoter of its target genes and can bind to DNA as either monomers or homodimers, depending on the nature of the response element. Binds as a monomer to a response element composed of the consensus half-site motif 5'-[A/G]GGTCA-3' preceded by an A/T-rich 5' sequence (RevRE), or as a homodimer to a direct repeat of the core motif spaced by two nucleotides (RevDR-2). Acts as a potent competitive repressor of ROR alpha (RORA) function and regulates the levels of its ligand heme by repressing the expression of PPARGC1A, a potent inducer of heme synthesis. Regulates lipid metabolism by repressing the expression of APOC3 and by influencing the activity of sterol response element binding proteins (SREBPs); represses INSIG2 which interferes with the proteolytic activation of SREBPs which in turn govern the rhythmic expression of enzymes with key functions in sterol and fatty acid synthesis. Regulates gluconeogenesis via repression of G6PC1 and PEPCK and adipocyte differentiation via repression of PPARG. Regulates glucagon release in pancreatic alpha-cells via the AMPK-NAMPT-SIRT1 pathway and the proliferation, glucose-induced insulin secretion and expression of key lipogenic genes in pancreatic-beta cells. Positively regulates bile acid synthesis by increasing hepatic expression of CYP7A1 via repression of NR0B2 and NFIL3 which are negative regulators of CYP7A1. Modulates skeletal muscle oxidative capacity by regulating mitochondrial biogenesis and autophagy; controls mitochondrial biogenesis and respiration by interfering with the STK11-PRKAA1/2-SIRT1-PPARGC1A signaling pathway. Represses the expression of SERPINE1/PAI1, an important modulator of cardiovascular disease and the expression of inflammatory cytokines and chemokines in macrophages. Represses gene expression at a distance in macrophages by inhibiting the transcription of enhancer-derived RNAs (eRNAs). Plays a role in the circadian regulation of body temperature and negatively regulates thermogenic transcriptional programs in brown adipose tissue (BAT); imposes a circadian oscillation in BAT activity, increasing body temperature when awake and depressing thermogenesis during sleep. In concert with NR2E3, regulates transcriptional networks critical for photoreceptor development and function. In addition to its activity as a repressor, can also act as a transcriptional activator. In the ovarian granulosa cells acts as a transcriptional activator of STAR which plays a role in steroid biosynthesis. In collaboration with SP1, activates GJA1 transcription in a heme-independent manner. Represses the transcription of CYP2B10, CYP4A10 and CYP4A14. Represses the transcription of CES2. Represses and regulates the circadian expression of TSHB in a NCOR1-dependent manner. Negatively regulates the protein stability of NR3C1 and influences the time-dependent subcellular distribution of NR3C1, thereby affecting its transcriptional regulatory activity. Plays a critical role in the circadian control of neutrophilic inflammation in the lung; under resting, non-stress conditions, acts as a rhythmic repressor to limit inflammatory activity whereas in the presence of inflammatory triggers undergoes ubiquitin-mediated degradation thereby relieving inhibition of the inflammatory response. Plays a key role in the circadian regulation of microglial activation and neuroinflammation; suppresses microglial activation through the NF-kappaB pathway in the central nervous system. Plays a role in the regulation of the diurnal rhythms of lipid and protein metabolism in the skeletal muscle via transcriptional repression of genes controlling lipid and amino acid metabolism in the muscle. This is Nuclear receptor subfamily 1 group D member 1 (Nr1d1) from Mus musculus (Mouse).